The primary structure comprises 144 residues: Elicitor-responsive protein 3 (144 aa).

Residues 1 to 103 (MVQGTLEVLL…YTEGSIPPTV (103 aa)) form the C2 domain. 5 residues coordinate Ca(2+): Asp20, Asp26, Asp73, Asp75, and Asp81. The tract at residues 123 to 144 (TPEDDRDRGLSEEDIGGWKQSS) is disordered.

Ca(2+) is required as a cofactor.

This Oryza sativa subsp. indica (Rice) protein is Elicitor-responsive protein 3 (ERG3).